The sequence spans 331 residues: Aspartate carbamoyltransferase catalytic subunit (331 aa).

Residues Arg-66 and Thr-67 each contribute to the carbamoyl phosphate site. Lys-94 provides a ligand contact to L-aspartate. Carbamoyl phosphate-binding residues include Arg-116, His-149, and Gln-152. 2 residues coordinate L-aspartate: Arg-189 and Arg-243. Residues Gly-284 and Pro-285 each coordinate carbamoyl phosphate.

Belongs to the aspartate/ornithine carbamoyltransferase superfamily. ATCase family. Heterododecamer (2C3:3R2) of six catalytic PyrB chains organized as two trimers (C3), and six regulatory PyrI chains organized as three dimers (R2).

It catalyses the reaction carbamoyl phosphate + L-aspartate = N-carbamoyl-L-aspartate + phosphate + H(+). Its pathway is pyrimidine metabolism; UMP biosynthesis via de novo pathway; (S)-dihydroorotate from bicarbonate: step 2/3. Its function is as follows. Catalyzes the condensation of carbamoyl phosphate and aspartate to form carbamoyl aspartate and inorganic phosphate, the committed step in the de novo pyrimidine nucleotide biosynthesis pathway. The protein is Aspartate carbamoyltransferase catalytic subunit of Thermosynechococcus vestitus (strain NIES-2133 / IAM M-273 / BP-1).